Here is a 251-residue protein sequence, read N- to C-terminus: Probable transcriptional regulatory protein Cgl1663/cg1872 (251 aa).

The segment at 1–22 (MSGHSKWATTKHKKAANDAKRG) is disordered.

The protein belongs to the TACO1 family.

The protein resides in the cytoplasm. The protein is Probable transcriptional regulatory protein Cgl1663/cg1872 of Corynebacterium glutamicum (strain ATCC 13032 / DSM 20300 / JCM 1318 / BCRC 11384 / CCUG 27702 / LMG 3730 / NBRC 12168 / NCIMB 10025 / NRRL B-2784 / 534).